Here is a 332-residue protein sequence, read N- to C-terminus: L-lactate dehydrogenase A chain (332 aa).

NAD(+)-binding positions include 29 to 57 (GMVG…MEDK) and Arg99. Positions 106, 138, and 169 each coordinate substrate. Asn138 is an NAD(+) binding site. The Proton acceptor role is filled by His193. Thr248 is a binding site for substrate.

The protein belongs to the LDH/MDH superfamily. LDH family. Homotetramer.

It is found in the cytoplasm. The catalysed reaction is (S)-lactate + NAD(+) = pyruvate + NADH + H(+). The protein operates within fermentation; pyruvate fermentation to lactate; (S)-lactate from pyruvate: step 1/1. Functionally, interconverts simultaneously and stereospecifically pyruvate and lactate with concomitant interconversion of NADH and NAD(+). This chain is L-lactate dehydrogenase A chain (ldha), found in Fundulus heteroclitus (Killifish).